The chain runs to 298 residues: MWAFRTARIGSLLAATSVILRRCLRLGVAMAKSKFEYVRNFEVQDTCLPHCWVVVRLDGRNFHRFAEEHNFAKPNDSRALHLMTKCAQTVMEELEDIVIAYGQSDEYSFVFRKKSNWFKRRASKFMTLVASQFASSYVFYWRDYFEDQPLRYPPGFDGRVVLYPSNQTLKDYLSWRQADCHINNLYNTVFWALIQQSGLTPVQAQQRLKGTLTADKNEILFSEFHINYNNEPHMYRKGTVLVWQKVEEVRTQEVRLPAEMEGEKKAVARTRTRVVALNCDLIGDAFWKEHPEILAEEN.

Mg(2+)-binding residues include D58, G59, and D105. GTP contacts are provided by residues 58–63 (DGRNFH) and 104–105 (SD).

This sequence belongs to the tRNA(His) guanylyltransferase family. In terms of assembly, homotetramer. Interacts with MFN1 and MFN2; functions as a guanyl-nucleotide exchange factor/GEF for MFN2 and also probably MFN1. It depends on Mg(2+) as a cofactor.

It is found in the cytoplasm. The protein localises to the mitochondrion. The catalysed reaction is a 5'-end ribonucleotide-tRNA(His) + GTP + ATP + H2O = a 5'-end phospho-guanosine-ribonucleotide-tRNA(His) + AMP + 2 diphosphate + H(+). In terms of biological role, adds a GMP to the 5'-end of tRNA(His) after transcription and RNase P cleavage. This step is essential for proper recognition of the tRNA and for the fidelity of protein synthesis. Also functions as a guanyl-nucleotide exchange factor/GEF for the MFN1 and MFN2 mitofusins thereby regulating mitochondrial fusion. By regulating both mitochondrial dynamics and bioenergetic function, it contributes to cell survival following oxidative stress. This Mus musculus (Mouse) protein is Probable tRNA(His) guanylyltransferase (Thg1l).